The primary structure comprises 320 residues: Ferrochelatase (320 aa).

2 residues coordinate Fe cation: H194 and E275.

This sequence belongs to the ferrochelatase family. As to quaternary structure, monomer.

It localises to the cytoplasm. The enzyme catalyses heme b + 2 H(+) = protoporphyrin IX + Fe(2+). The protein operates within porphyrin-containing compound metabolism; protoheme biosynthesis; protoheme from protoporphyrin-IX: step 1/1. In terms of biological role, catalyzes the ferrous insertion into protoporphyrin IX. The chain is Ferrochelatase from Escherichia coli O81 (strain ED1a).